Reading from the N-terminus, the 423-residue chain is Pre-mRNA-splicing regulator WTAP (423 aa).

The disordered stretch occupies residues 234 to 423; it reads QQLSQMNQTQ…TSNASAGSVL (190 aa). 4 stretches are compositionally biased toward polar residues: residues 239–276, 285–301, 358–377, and 392–404; these read MNQT…SSNV, NGPS…SGSS, DSPT…TDSN, and TAGT…NGLD. Low complexity predominate over residues 405-423; that stretch reads SSAAAVATNTSNASAGSVL.

Belongs to the fl(2)d family. As to quaternary structure, component of the WMM complex, a N6-methyltransferase complex composed of a catalytic subcomplex, named MAC, and of an associated subcomplex, named MACOM. Component of the MACOM subcomplex.

It is found in the nucleus speckle. The protein resides in the nucleus. It localises to the nucleoplasm. In terms of biological role, associated component of the WMM complex, a complex that mediates N6-methyladenosine (m6A) methylation of RNAs, a modification that plays a role in the efficiency of mRNA splicing and RNA processing. This is Pre-mRNA-splicing regulator WTAP from Danio rerio (Zebrafish).